The chain runs to 187 residues: uncharacterized protein (187 aa).

A helical membrane pass occupies residues 8 to 28; it reads ITFFIILLICLICILLLLVVF. The disordered stretch occupies residues 99–153; sequence PLENRRDMEAEEENQINEKQEPENAGETGQEEDDGLQKIHTSVTRTPSVVESQKR. Over residues 137-149 the composition is skewed to polar residues; that stretch reads IHTSVTRTPSVVE.

The protein resides in the membrane. This is an uncharacterized protein from Homo sapiens (Human).